The chain runs to 389 residues: Vacuolar protein sorting-associated protein vts1 (389 aa).

Residues 149–335 (NPQRKAKTPS…RPSQPTKASP (187 aa)) form a disordered region. Polar residues-rich tracts occupy residues 156-177 (TPSN…TLPT), 184-219 (TNAS…SSEP), and 227-282 (SLSS…PESK). Positions 294–306 (TSITTTSTSIDPS) are enriched in low complexity. The segment covering 308 to 334 (AFSSKSTLATTRTNAPLSRPSQPTKAS) has biased composition (polar residues).

It belongs to the VTA1 family. Homodimer (in cytoplasm).

Its subcellular location is the cytoplasm. It localises to the endosome membrane. Has a role in the formation of the multivesicular body (MVB). Required for the sorting of lipids to form intralumenal vesicles and for fluid-phase transport to the vacuole. Required for sorting several plasma membrane proteins into the MVB. This Schizosaccharomyces pombe (strain 972 / ATCC 24843) (Fission yeast) protein is Vacuolar protein sorting-associated protein vts1 (vts1).